The sequence spans 123 residues: Small ribosomal subunit protein uS12c (123 aa).

The segment at 9-31 (RNKRQAAENKTKSPALQRSPQRR) is disordered.

It belongs to the universal ribosomal protein uS12 family. Part of the 30S ribosomal subunit.

The protein resides in the plastid. It localises to the chloroplast. Its function is as follows. With S4 and S5 plays an important role in translational accuracy. Located at the interface of the 30S and 50S subunits. The chain is Small ribosomal subunit protein uS12c (rps12) from Spirogyra maxima (Green alga).